A 489-amino-acid chain; its full sequence is MSAAEPALAPLSPGAPVLVAGGGITGRAVLAALRRFGAAPTLCDDDPATLRGYVDSGVDTVSTSAAAERISRYALVVTSPGFAPTAPLPLAAAAAGVPVWGDVELAWRLDAAGHYGPPRRWLVVTGTNGKTTTTSMLHAMLTAAGRRSLLCGNIGSPVLDVLDQPAELLAVELSSFQLHWAPSLRPEGGAVLNIAEDHLDWHGTLADYAAAKARVLDGRVAVVGLDDSRAAALLSTARAPVRVGFRLGEPAAGELGVRGGQLVDRAFADDLTLLPVDSIPVPGPVGVLDALAAAALARCVDVPASPIAEAIVSFRVGRHRAEVVAVADGITYVDDSKATNPHAAEASVLAYPRVVWIAGGLLKGASVDAVVARMASRLVGAVLIGRDRREVAEALSRHAPDVPVVHVVTGEDAGMDATPVVFGANVTKVKHLGGDLGAAVMSAAVAAARDLAKPGDTVLLAPAAASFDQFAGYADRGDAFAAAVRAAIR.

An ATP-binding site is contributed by 126 to 132 (GTNGKTT).

It belongs to the MurCDEF family.

Its subcellular location is the cytoplasm. The catalysed reaction is UDP-N-acetyl-alpha-D-muramoyl-L-alanine + D-glutamate + ATP = UDP-N-acetyl-alpha-D-muramoyl-L-alanyl-D-glutamate + ADP + phosphate + H(+). Its pathway is cell wall biogenesis; peptidoglycan biosynthesis. Cell wall formation. Catalyzes the addition of glutamate to the nucleotide precursor UDP-N-acetylmuramoyl-L-alanine (UMA). In Mycobacterium avium (strain 104), this protein is UDP-N-acetylmuramoylalanine--D-glutamate ligase.